A 197-amino-acid chain; its full sequence is Shikimate kinase (197 aa).

14-19 (GSGKST) lines the ATP pocket. S18 lines the Mg(2+) pocket. Residues D36, R60, and G82 each contribute to the substrate site. R120 provides a ligand contact to ATP. R147 is a binding site for substrate.

It belongs to the shikimate kinase family. As to quaternary structure, monomer. The cofactor is Mg(2+).

Its subcellular location is the cytoplasm. The catalysed reaction is shikimate + ATP = 3-phosphoshikimate + ADP + H(+). Its pathway is metabolic intermediate biosynthesis; chorismate biosynthesis; chorismate from D-erythrose 4-phosphate and phosphoenolpyruvate: step 5/7. Its function is as follows. Catalyzes the specific phosphorylation of the 3-hydroxyl group of shikimic acid using ATP as a cosubstrate. The sequence is that of Shikimate kinase from Prosthecochloris aestuarii (strain DSM 271 / SK 413).